Reading from the N-terminus, the 870-residue chain is Leucine--tRNA ligase (870 aa).

Positions 43–53 (PYPSGRIHMGH) match the 'HIGH' region motif. Residues 630–634 (KMSKS) carry the 'KMSKS' region motif. K633 provides a ligand contact to ATP.

It belongs to the class-I aminoacyl-tRNA synthetase family.

It localises to the cytoplasm. It carries out the reaction tRNA(Leu) + L-leucine + ATP = L-leucyl-tRNA(Leu) + AMP + diphosphate. The polypeptide is Leucine--tRNA ligase (Parvibaculum lavamentivorans (strain DS-1 / DSM 13023 / NCIMB 13966)).